The primary structure comprises 477 residues: ATP synthase subunit beta, chloroplastic (477 aa).

156 to 163 (GGAGVGKT) provides a ligand contact to ATP.

This sequence belongs to the ATPase alpha/beta chains family. F-type ATPases have 2 components, CF(1) - the catalytic core - and CF(0) - the membrane proton channel. CF(1) has five subunits: alpha(3), beta(3), gamma(1), delta(1), epsilon(1). CF(0) has four main subunits: a(1), b(1), b'(1) and c(9-12).

It is found in the plastid. Its subcellular location is the chloroplast thylakoid membrane. The enzyme catalyses ATP + H2O + 4 H(+)(in) = ADP + phosphate + 5 H(+)(out). Functionally, produces ATP from ADP in the presence of a proton gradient across the membrane. The catalytic sites are hosted primarily by the beta subunits. This chain is ATP synthase subunit beta, chloroplastic, found in Bigelowiella natans (Pedinomonas minutissima).